Reading from the N-terminus, the 454-residue chain is Cobyrinate a,c-diamide synthase (454 aa).

One can recognise a GATase cobBQ-type domain in the interval 244-435 (KIAVAYDSAF…VHIHFLSNIA (192 aa)). Cysteine 327 acts as the Nucleophile in catalysis.

This sequence belongs to the CobB/CbiA family. Mg(2+) is required as a cofactor.

It carries out the reaction cob(II)yrinate + 2 L-glutamine + 2 ATP + 2 H2O = cob(II)yrinate a,c diamide + 2 L-glutamate + 2 ADP + 2 phosphate + 2 H(+). Its pathway is cofactor biosynthesis; adenosylcobalamin biosynthesis; cob(II)yrinate a,c-diamide from sirohydrochlorin (anaerobic route): step 10/10. Functionally, catalyzes the ATP-dependent amidation of the two carboxylate groups at positions a and c of cobyrinate, using either L-glutamine or ammonia as the nitrogen source. This Thermoplasma volcanium (strain ATCC 51530 / DSM 4299 / JCM 9571 / NBRC 15438 / GSS1) protein is Cobyrinate a,c-diamide synthase.